The chain runs to 1187 residues: Probable histidine kinase 5 (1187 aa).

The Extracellular portion of the chain corresponds to 1–175 (MSRVGECGGG…QNNALSFNHG (175 aa)). The chain crosses the membrane as a helical span at residues 176-196 (MIFSLSASLGIVVILVVITIF). At 197–226 (KRGKQANELCQHEKLLQTPSVKISRKWSKR) the chain is on the cytoplasmic side. A helical transmembrane segment spans residues 227-247 (ALLLGVLVGLCSSVWIFSSMH). The Extracellular segment spans residues 248 to 531 (ADVVARRIEN…FKHAPSLPWS (284 aa)). The CHASE domain occupies 295 to 519 (NPSAIDQKTF…GDPTRKHVMH (225 aa)). Residues 532 to 552 (AIMISSAVAIIVLLVGYIIYA) traverse the membrane as a helical segment. At 553–1187 (TLNSLEEAED…LEADATDPLT (635 aa)) the chain is on the cytoplasmic side. One can recognise a Histidine kinase domain in the interval 587–862 (TVSHEIRTPM…TFSFTAIFKE (276 aa)). At His590 the chain carries Phosphohistidine; by autocatalysis. 2 Response regulatory domains span residues 886–1017 (RALV…SKAL) and 1041–1178 (NILV…AHFL). 2 positions are modified to 4-aspartylphosphate: Asp942 and Asp1091.

Activation probably requires a transfer of a phosphate group between a His in the transmitter domain and an Asp of the receiver domain. Highly expressed in young leaves and at lower levels in roots, mature leaves, stems and spikelets.

The protein resides in the cell membrane. It carries out the reaction ATP + protein L-histidine = ADP + protein N-phospho-L-histidine.. In terms of biological role, cytokinin receptor related to bacterial two-component regulators. Functions as a histidine kinase and transmits the stress signal to a downstream MAPK cascade. This is Probable histidine kinase 5 from Oryza sativa subsp. japonica (Rice).